Consider the following 599-residue polypeptide: Thiamine transporter THI72 (599 aa).

11 helical membrane-spanning segments follow: residues 42-62, 78-98, 112-132, 174-194, 197-217, 280-300, 333-353, 372-392, 395-415, 447-467, and 484-504; these read WGFW…GMWI, IGAF…NSCP, FVFG…MSIV, LIGF…KPYH, YILI…VIYL, IVAL…GASA, FFCG…NCGF, GAIF…YNSS, FLTV…VMIC, AIVA…WEVN, and SFFS…LFPF. Residues 553 to 599 form a disordered region; that stretch reads HEYKPESSDDELPELTKTSSENTKVFEIVHQKDNEKESSTSSEKQIA. Phosphoserine is present on residues S560 and S572. Positions 579 to 590 are enriched in basic and acidic residues; that stretch reads EIVHQKDNEKES.

The protein belongs to the purine-cytosine permease (2.A.39) family.

Its subcellular location is the membrane. In terms of biological role, low affinity thiamine transporter responsible for intake of thiamine. It is possible that the primary function is the uptake of closely related compounds and that thiamine transport is a secondary activity of these proteins. The sequence is that of Thiamine transporter THI72 (THI72) from Saccharomyces cerevisiae (strain ATCC 204508 / S288c) (Baker's yeast).